Here is a 502-residue protein sequence, read N- to C-terminus: Cytochrome P450 monooxygenase AacuE (502 aa).

A helical transmembrane segment spans residues 4 to 26 (AITGLVATVTTFLAYIVFLSYTP). Residue asparagine 393 is glycosylated (N-linked (GlcNAc...) asparagine). Residue cysteine 439 participates in heme binding.

It belongs to the cytochrome P450 family. Heme is required as a cofactor.

The protein localises to the membrane. It participates in secondary metabolite biosynthesis. Its function is as follows. Cytochrome P450 monooxygenase; part of the gene cluster that mediates the biosynthesis of the tetrahydroxanthone dimer secalonic acid D. The pathway begins with the synthesis of atrochrysone thioester by the polyketide synthase AacuL. The atrochrysone carboxyl ACP thioesterase AacuM then breaks the thioester bond and releases the atrochrysone carboxylic acid from AacuL. Atrochrysone carboxylic acid is decarboxylated by the decarboxylase AacuI, and oxidized by the anthrone oxygenase AacuG to yield emodin. Emodin is then reduced to emodin hydroquinone by a yet unidentified oxidoreductase. A-ring reduction by the short chain dehydrogenase AacuN, dehydration by the scytalone dehydratase-like protein AacuK and probable spontaneous re-oxidation, results in overall deoxygenation to chrysophanol. Baeyer-Villiger oxidation by the Baeyer-Villiger monooxygenase (BVMO) AacuH then yields monodictyphenone. Monodictyphenone is transformed into compounds with the tetrahydroxanthone skeleton via methylesterification by the methyltransferase AacuQ, followed by the action of the flavin-dependent monooxygenase AacuC, the isomerase AacuP, and the short chain dehydrogenase/reductase AacuF or AacuD. AacuF and AacuD should accept the same compound as a substrate but perform the ketoreduction with a different stereoselectivity, thus yielding blennolides B and A, respectively. In the final step of the biosynthesis, the cytochrome P450 monooxygenase AacuE accepts blennolide B and/or blennolide A to conduct the dimerization reaction to furnish the tetrahydroxanthone dimers, secalonic acids D, B, and F. The protein is Cytochrome P450 monooxygenase AacuE of Aspergillus aculeatus (strain ATCC 16872 / CBS 172.66 / WB 5094).